The sequence spans 157 residues: Thioredoxin 2 (157 aa).

The N-terminal stretch at Met1 to Cys22 is a signal peptide. The 112-residue stretch at Leu46–Leu157 folds into the Thioredoxin domain. Residues Cys82 and Cys85 each act as nucleophile in the active site. A disulfide bridge links Cys82 with Cys85.

It belongs to the thioredoxin family. In terms of assembly, monomer. Component of the translocon PTEX complex composed of HSP101, EXP2, PTEX150, PTEX88 and TRX2. In terms of processing, the disulfide bond between Cys-82 and Cys-85 acts as a redox-active center and is reduced by thioredoxin reductase TRXR.

Its function is as follows. Participates in various redox reactions through the reversible oxidation of its active center dithiol to a disulfide and catalyzes dithiol-disulfide exchange reactions. As part of the translocon PTEX complex, plays a role in the export of parasite proteins into the host erythrocyte. The translocon PTEX complex is a multi-protein machinery resident in the parasite parasitophorous vacuolar membrane, responsible for protein secretion into host cells. May contribute to the unfolding of proteins containing the PEXEL localization motif before their passage through the translocon or regulate the PTEX complex function. In Plasmodium berghei (strain Anka), this protein is Thioredoxin 2.